Here is a 317-residue protein sequence, read N- to C-terminus: Transaldolase (317 aa).

Lys126 (schiff-base intermediate with substrate) is an active-site residue.

It belongs to the transaldolase family. Type 1 subfamily. Homodimer.

The protein localises to the cytoplasm. The enzyme catalyses D-sedoheptulose 7-phosphate + D-glyceraldehyde 3-phosphate = D-erythrose 4-phosphate + beta-D-fructose 6-phosphate. Its pathway is carbohydrate degradation; pentose phosphate pathway; D-glyceraldehyde 3-phosphate and beta-D-fructose 6-phosphate from D-ribose 5-phosphate and D-xylulose 5-phosphate (non-oxidative stage): step 2/3. In terms of biological role, transaldolase is important for the balance of metabolites in the pentose-phosphate pathway. The chain is Transaldolase from Burkholderia pseudomallei (strain K96243).